Consider the following 119-residue polypeptide: Ribosome-binding factor A (119 aa).

It belongs to the RbfA family. As to quaternary structure, monomer. Binds 30S ribosomal subunits, but not 50S ribosomal subunits or 70S ribosomes.

Its subcellular location is the cytoplasm. In terms of biological role, one of several proteins that assist in the late maturation steps of the functional core of the 30S ribosomal subunit. Associates with free 30S ribosomal subunits (but not with 30S subunits that are part of 70S ribosomes or polysomes). Required for efficient processing of 16S rRNA. May interact with the 5'-terminal helix region of 16S rRNA. This is Ribosome-binding factor A from Coxiella burnetii (strain CbuK_Q154) (Coxiella burnetii (strain Q154)).